A 531-amino-acid polypeptide reads, in one-letter code: Endoglucanase 7 (531 aa).

The signal sequence occupies residues 1–27; it reads MRGRALVLVAALLLQLLLLAAAGGAGA. Catalysis depends on aspartate 89, which acts as the Nucleophile. Catalysis depends on residues histidine 430, aspartate 482, and glutamate 491.

It belongs to the glycosyl hydrolase 9 (cellulase E) family. As to expression, ubiquitous.

Its subcellular location is the secreted. The enzyme catalyses Endohydrolysis of (1-&gt;4)-beta-D-glucosidic linkages in cellulose, lichenin and cereal beta-D-glucans.. This chain is Endoglucanase 7 (GLU10), found in Oryza sativa subsp. japonica (Rice).